Consider the following 266-residue polypeptide: E3 ubiquitin-protein ligase RNF170 (266 aa).

Over 1–26 (MEGSVCVDGAAAPAPDEASLIEGVSN) the chain is Lumenal. A helical membrane pass occupies residues 27 to 47 (AVLLVLVLSVTLLAGLTTLLC). Topologically, residues 48–209 (RSEQQRIHPE…GGLFWMFRVR (162 aa)) are cytoplasmic. Residues 88–131 (CPVCLQQAVLPVETNCGHLFCGSCIIAYWRYGTWLGAISCPICR) form an RING-type zinc finger. The helical transmembrane segment at 210–230 (ILLCVCGALAYLVSPLDFLPE) threads the bilayer. G231 is a topological domain (lumenal). A helical membrane pass occupies residues 232-252 (VLGLLGFLDDFFVILLLFIYI). Residues 253–266 (SIMYREVVTQRLAG) lie on the Cytoplasmic side of the membrane.

As to expression, highly expressed in the developing brain, and less within intersomitic structures of the trunk.

The protein localises to the endoplasmic reticulum membrane. The enzyme catalyses S-ubiquitinyl-[E2 ubiquitin-conjugating enzyme]-L-cysteine + [acceptor protein]-L-lysine = [E2 ubiquitin-conjugating enzyme]-L-cysteine + N(6)-ubiquitinyl-[acceptor protein]-L-lysine.. The protein operates within protein modification; protein ubiquitination. In terms of biological role, E3 ubiquitin-protein ligase that plays an essential role in stimulus-induced inositol 1,4,5-trisphosphate receptor (ITPR) ubiquitination and degradation via the endoplasmic reticulum-associated degradation (ERAD) pathway. Also involved in ITPR turnover in resting cells. This chain is E3 ubiquitin-protein ligase RNF170 (rnf170), found in Danio rerio (Zebrafish).